The primary structure comprises 167 residues: MLSKDIIKLLNEQVNKEMNSSNLYMSMSSWCYTHSLDGAGLFLFDHAAEEYEHAKKLIIFLNENNVPVQLTSISAPEHKFEGLTQIFQKAYEHEQHISESINNIVDHAIKSKDHATFNFLQWYVAEQHEEEVLFKDILDKIELIGNENHGLYLADQYVKGIAKSRKS.

The 145-residue stretch at 1-145 (MLSKDIIKLL…DILDKIELIG (145 aa)) folds into the Ferritin-like diiron domain. 5 residues coordinate Fe cation: glutamate 17, glutamate 50, histidine 53, glutamate 94, and glutamine 127.

This sequence belongs to the ferritin family. Prokaryotic subfamily. Homooligomer of 24 subunits that assemble into a spherical protein shell (12 +/- 1 nM diameter) that can sequester at least 2000 iron atoms.

It is found in the cytoplasm. The catalysed reaction is 4 Fe(2+) + O2 + 6 H2O = 4 iron(III) oxide-hydroxide + 12 H(+). Its function is as follows. Iron-storage protein. The polypeptide is Bacterial non-heme ferritin (ftnA) (Helicobacter pylori (strain J99 / ATCC 700824) (Campylobacter pylori J99)).